Consider the following 144-residue polypeptide: L-fucose mutarotase (144 aa).

Histidine 22 (proton donor) is an active-site residue. Residues aspartate 30, arginine 109, and 131–133 (YGN) each bind substrate.

Belongs to the RbsD / FucU family. FucU mutarotase subfamily. Homodecamer.

It is found in the cytoplasm. It catalyses the reaction alpha-L-fucose = beta-L-fucose. Its pathway is carbohydrate metabolism; L-fucose metabolism. Involved in the anomeric conversion of L-fucose. The protein is L-fucose mutarotase of Haemophilus influenzae (strain PittEE).